The following is a 591-amino-acid chain: L-fucose isomerase (591 aa).

Residues Glu-337 and Asp-361 each act as proton acceptor in the active site. Residues Glu-337, Asp-361, and His-528 each contribute to the Mn(2+) site.

It belongs to the L-fucose isomerase family. As to quaternary structure, homohexamer. The cofactor is Mn(2+).

It localises to the cytoplasm. It catalyses the reaction L-fucose = L-fuculose. It functions in the pathway carbohydrate degradation; L-fucose degradation; L-lactaldehyde and glycerone phosphate from L-fucose: step 1/3. Functionally, converts the aldose L-fucose into the corresponding ketose L-fuculose. In Citrobacter koseri (strain ATCC BAA-895 / CDC 4225-83 / SGSC4696), this protein is L-fucose isomerase.